Reading from the N-terminus, the 314-residue chain is Lysophospholipase D GDPD1 (314 aa).

The Extracellular segment spans residues 1–3 (MSS). A helical transmembrane segment spans residues 4–24 (TAAFCLLSTLGGYLVTSFLLL). Residues 25-195 (KYPALLHQRK…VDKCYKENSD (171 aa)) lie on the Cytoplasmic side of the membrane. The GP-PDE domain occupies 40-309 (SRHISHRGGA…DYPTKLKDFL (270 aa)). The a divalent metal cation site is built by E72, D74, and H87. The chain crosses the membrane as a helical span at residues 196 to 216 (IPILFSLQRVLLILGLFFTGL). The Extracellular segment spans residues 217–314 (LPFVPIREQF…LKDFLNNFSA (98 aa)).

The protein belongs to the glycerophosphoryl diester phosphodiesterase family. In terms of tissue distribution, widely expressed.

The protein resides in the cytoplasm. It localises to the membrane. The protein localises to the perinuclear region. Its subcellular location is the endoplasmic reticulum. It carries out the reaction 1-hexadecanoyl-sn-glycero-3-phosphocholine + H2O = 1-hexadecanoyl-sn-glycero-3-phosphate + choline + H(+). The enzyme catalyses 1-hexadecanoyl-sn-glycero-3-phosphoethanolamine + H2O = 1-hexadecanoyl-sn-glycero-3-phosphate + ethanolamine + H(+). The catalysed reaction is N-hexadecanoyl-sn-glycero-3-phosphoethanolamine + H2O = N-hexadecanoylethanolamine + sn-glycerol 3-phosphate + H(+). It catalyses the reaction N-(5Z,8Z,11Z,14Z-eicosatetraenoyl)-1-(9Z-octadecenoyl)-sn-glycero-3-phosphoethanolamine + H2O = N-(5Z,8Z,11Z,14Z-eicosatetraenoyl)-ethanolamine + 1-(9Z-octadecenoyl)-sn-glycero-3-phosphate + H(+). It carries out the reaction N,1-di-(9Z-octadecenoyl)-sn-glycero-3-phosphoethanolamine + H2O = N-(9Z-octadecenoyl) ethanolamine + 1-(9Z-octadecenoyl)-sn-glycero-3-phosphate + H(+). The enzyme catalyses N-hexadecanoyl-1-(9Z-octadecenoyl)-sn-glycero-3-phosphoethanolamine + H2O = N-hexadecanoylethanolamine + 1-(9Z-octadecenoyl)-sn-glycero-3-phosphate + H(+). The catalysed reaction is a 1-O-alkyl-sn-glycero-3-phosphocholine + H2O = a 1-O-alkyl-sn-glycero-3-phosphate + choline + H(+). It catalyses the reaction 1-O-hexadecyl-sn-glycero-3-phosphocholine + H2O = 1-O-hexadecyl-sn-glycero-3-phosphate + choline + H(+). It carries out the reaction 1-(9Z-octadecenoyl)-sn-glycero-3-phosphocholine + H2O = 1-(9Z-octadecenoyl)-sn-glycero-3-phosphate + choline + H(+). The enzyme catalyses N,1-dihexadecanoyl-sn-glycero-3-phosphoethanolamine + H2O = N-hexadecanoylethanolamine + 1-hexadecanoyl-sn-glycero-3-phosphate + H(+). The catalysed reaction is 1-O-(1Z-octadecenyl)-sn-glycero-3-phospho-(N-5Z,8Z,11Z,14Z-eicosatetraenoyl)-ethanolamine + H2O = 1-O-(1Z-octadecenyl)-sn-glycero-3-phosphate + N-(5Z,8Z,11Z,14Z-eicosatetraenoyl)-ethanolamine + H(+). It catalyses the reaction 1-O-(1Z-octadecenyl)-sn-glycero-3-phospho-(N-9Z-octadecenoyl)-ethanolamine + H2O = 1-O-(1Z-octadecenyl)-sn-glycero-3-phosphate + N-(9Z-octadecenoyl) ethanolamine + H(+). It carries out the reaction 1-O-(1Z-octadecenyl)-sn-glycero-3-phospho-N-hexadecanoyl-ethanolamine + H2O = 1-O-(1Z-octadecenyl)-sn-glycero-3-phosphate + N-hexadecanoylethanolamine + H(+). With respect to regulation, lysophospholipase D activity is increased by magnesium and manganese and inhibited by calcium in a concentration dependent manner. Loss of lysophospholipase D activity by addition of EDTA. In terms of biological role, hydrolyzes lysoglycerophospholipids to produce lysophosphatidic acid (LPA) and the corresponding amines. Shows a preference for 1-O-alkyl-sn-glycero-3-phosphocholine (lyso-PAF), lysophosphatidylethanolamine (lyso-PE) and lysophosphatidylcholine (lyso-PC). May be involved in bioactive N-acylethanolamine biosynthesis from both N-acyl-lysoplasmenylethanolamin (N-acyl-lysoPlsEt) and N-acyl-lysophosphatidylethanolamin (N-acyl-lysoPE). In addition, hydrolyzes glycerophospho-N-acylethanolamine to N-acylethanolamine. Does not display glycerophosphodiester phosphodiesterase activity, since it cannot hydrolyze either glycerophosphoinositol or glycerophosphocholine. The chain is Lysophospholipase D GDPD1 from Mus musculus (Mouse).